Here is a 359-residue protein sequence, read N- to C-terminus: DNA polymerase IV (359 aa).

Residues 7–188 (IIHIDMDAFY…LPIGKFFGVG (182 aa)) form the UmuC domain. Mg(2+) is bound by residues aspartate 11 and aspartate 106. Glutamate 107 is an active-site residue.

The protein belongs to the DNA polymerase type-Y family. Monomer. Mg(2+) is required as a cofactor.

Its subcellular location is the cytoplasm. The enzyme catalyses DNA(n) + a 2'-deoxyribonucleoside 5'-triphosphate = DNA(n+1) + diphosphate. Its function is as follows. Poorly processive, error-prone DNA polymerase involved in untargeted mutagenesis. Copies undamaged DNA at stalled replication forks, which arise in vivo from mismatched or misaligned primer ends. These misaligned primers can be extended by PolIV. Exhibits no 3'-5' exonuclease (proofreading) activity. May be involved in translesional synthesis, in conjunction with the beta clamp from PolIII. This Clostridium perfringens (strain 13 / Type A) protein is DNA polymerase IV.